The following is a 159-amino-acid chain: MFDILMYLFENYVQNDLEVDMLVDEDQLKKELALAGFRQTEIIKALNWLEHLADLRDSEQPYLCHHEQHSFRVYTPEEMERLDVECRGFLMFLEQIKVLNVEAREMVIDRVMDLDESSLTLDDLKWVIMMVLFNAPGQEMAYNQMENMMFDEQPGRLHS.

This sequence belongs to the Smg family.

In Shewanella amazonensis (strain ATCC BAA-1098 / SB2B), this protein is Protein Smg homolog.